Reading from the N-terminus, the 266-residue chain is MVKVTFNSALAQKEAKKDEPKSGEEALIIPPDAVAVDCKDPDDVVPVGQRRAWCWCMCFGLAFMLAGVILGGAYLYKYFALQPDDVYYCGIKYIKDDVILNEPSADAPAALYQTIEENIKIFEEEEVEFISVPVPEFADSDPANIVHDFNKKLTAYLDLNLDKCYVIPLNTSIVMPPRNLLELLINIKAGTYLPQSYLIHEHMVITDRIENIDHLGFFIYRLCHDKETYKLQRRETIKGIQKREASNCFAIRHFENKFAVETLICS.

Residues 1–54 (MVKVTFNSALAQKEAKKDEPKSGEEALIIPPDAVAVDCKDPDDVVPVGQRRAWC) are Cytoplasmic-facing. The chain crosses the membrane as a helical; Signal-anchor for type II membrane protein span at residues 55–75 (WCMCFGLAFMLAGVILGGAYL). Residues 76 to 266 (YKYFALQPDD…KFAVETLICS (191 aa)) are Lumenal-facing. The necessary for interaction with APP and inhibitor effects on APP processing stretch occupies residues 102-134 (EPSADAPAALYQTIEENIKIFEEEEVEFISVPV). Positions 137-231 (FADSDPANIV…LCHDKETYKL (95 aa)) constitute a BRICHOS domain. Disulfide bonds link Cys164/Cys223 and Cys248/Cys265. Asn170 is a glycosylation site (N-linked (GlcNAc...) asparagine).

The protein belongs to the ITM2 family. Homodimer; disulfide-linked. Interacts with SPPL2A and SPPL2B. Interacts with APP. Mature BRI2 (mBRI2) interacts with the APP amyloid-beta A4 protein; the interaction occurs at the cell surface and in the endocytic compartments and enable alpha- and beta-secretase-induced APP cleavage inhibition. Mature BRI2 (mBRI2) interacts with the APP C99; the interaction occurs in the endocytic compartments and enable gamma-secretase-induced C99 cleavage inhibition. May form heterodimers with Bri23 peptide and APP amyloid-beta protein 40. Interacts with ADAM7 in sperm; the interaction increases following capacitation. Post-translationally, the ectodomain C-terminal part of the imBRI2 is processed by furin producing a secreted Bri23 peptide and a mature BRI2, membrane form (mBRI2). The remaining part of the ectodomain of mBRI2 containing the BRICHOS domain is cleaved by ADAM10 and is secreted (BRI2C, soluble form). The membrane-bound N-terminal fragment (BRI2C, membrane form) is further proteolytically processed by SPPL2A and SPPL2B through regulated intramembrane proteolysis producing a secreted C-peptide and a BRI2 intracellular domain (BRI2 ICD) released in the cytosol. Shedding by ADAM10 facilitates intramembrane cleavage but is not absolutely required for BRI2 ICD generation. In terms of processing, glycosylation at Asn-170 is important for cell surface localization, but doesn't affect furin- and ADAM10-induced proteolytic processing. In terms of tissue distribution, ubiquitous. Expressed in brain.

The protein localises to the golgi apparatus membrane. It localises to the cell membrane. The protein resides in the endosome membrane. Its subcellular location is the secreted. Plays a regulatory role in the processing of the amyloid-beta A4 precursor protein (APP) and acts as an inhibitor of the amyloid-beta peptide aggregation and fibrils deposition. Plays a role in the induction of neurite outgrowth. Functions as a protease inhibitor by blocking access of secretases to APP cleavage sites. Functionally, mature BRI2 (mBRI2) functions as a modulator of the amyloid-beta A4 precursor protein (APP) processing leading to a strong reduction in the secretion of secretase-processed amyloid-beta protein 40 and amyloid-beta protein 42. Its function is as follows. Bri23 peptide prevents aggregation of APP amyloid-beta protein 42 into toxic oligomers. The protein is Integral membrane protein 2B (ITM2B) of Homo sapiens (Human).